The chain runs to 860 residues: Leucine--tRNA ligase (860 aa).

The short motif at 42 to 52 (PYPSGRLHMGH) is the 'HIGH' region element. A 'KMSKS' region motif is present at residues 619 to 623 (KMSKS). Lys-622 contacts ATP.

It belongs to the class-I aminoacyl-tRNA synthetase family.

The protein resides in the cytoplasm. It carries out the reaction tRNA(Leu) + L-leucine + ATP = L-leucyl-tRNA(Leu) + AMP + diphosphate. The polypeptide is Leucine--tRNA ligase (Photorhabdus laumondii subsp. laumondii (strain DSM 15139 / CIP 105565 / TT01) (Photorhabdus luminescens subsp. laumondii)).